Reading from the N-terminus, the 249-residue chain is Type III pantothenate kinase (249 aa).

Residue 6 to 13 coordinates ATP; the sequence is DVGNTHTT. 101–104 serves as a coordination point for substrate; sequence GADR. The Proton acceptor role is filled by D103. A K(+)-binding site is contributed by D123. T126 lines the ATP pocket. A substrate-binding site is contributed by T177.

The protein belongs to the type III pantothenate kinase family. In terms of assembly, homodimer. The cofactor is NH4(+). It depends on K(+) as a cofactor.

It is found in the cytoplasm. It catalyses the reaction (R)-pantothenate + ATP = (R)-4'-phosphopantothenate + ADP + H(+). It participates in cofactor biosynthesis; coenzyme A biosynthesis; CoA from (R)-pantothenate: step 1/5. Catalyzes the phosphorylation of pantothenate (Pan), the first step in CoA biosynthesis. This chain is Type III pantothenate kinase, found in Thermosipho africanus (strain TCF52B).